We begin with the raw amino-acid sequence, 475 residues long: Siroheme synthase (475 aa).

The interval 1 to 204 is precorrin-2 dehydrogenase /sirohydrochlorin ferrochelatase; it reads MDYLPVFLNI…GRDQAAQDYL (204 aa). Residues 22–23 and 43–44 each bind NAD(+); these read EI and PA. A Phosphoserine modification is found at Ser-129. Residues 218 to 475 form a uroporphyrinogen-III C-methyltransferase region; it reads GEVYLVGAGP…MGTSSGPGYP (258 aa). S-adenosyl-L-methionine is bound at residue Pro-227. The active-site Proton acceptor is the Asp-250. Lys-272 (proton donor) is an active-site residue. S-adenosyl-L-methionine-binding positions include 303–305, Ile-308, 333–334, Met-385, and Gly-414; these read GGD and TA.

The protein in the N-terminal section; belongs to the precorrin-2 dehydrogenase / sirohydrochlorin ferrochelatase family. This sequence in the C-terminal section; belongs to the precorrin methyltransferase family.

The catalysed reaction is uroporphyrinogen III + 2 S-adenosyl-L-methionine = precorrin-2 + 2 S-adenosyl-L-homocysteine + H(+). It catalyses the reaction precorrin-2 + NAD(+) = sirohydrochlorin + NADH + 2 H(+). The enzyme catalyses siroheme + 2 H(+) = sirohydrochlorin + Fe(2+). Its pathway is cofactor biosynthesis; adenosylcobalamin biosynthesis; precorrin-2 from uroporphyrinogen III: step 1/1. The protein operates within cofactor biosynthesis; adenosylcobalamin biosynthesis; sirohydrochlorin from precorrin-2: step 1/1. It functions in the pathway porphyrin-containing compound metabolism; siroheme biosynthesis; precorrin-2 from uroporphyrinogen III: step 1/1. It participates in porphyrin-containing compound metabolism; siroheme biosynthesis; siroheme from sirohydrochlorin: step 1/1. Its pathway is porphyrin-containing compound metabolism; siroheme biosynthesis; sirohydrochlorin from precorrin-2: step 1/1. Multifunctional enzyme that catalyzes the SAM-dependent methylations of uroporphyrinogen III at position C-2 and C-7 to form precorrin-2 via precorrin-1. Then it catalyzes the NAD-dependent ring dehydrogenation of precorrin-2 to yield sirohydrochlorin. Finally, it catalyzes the ferrochelation of sirohydrochlorin to yield siroheme. This chain is Siroheme synthase, found in Nitrosomonas europaea (strain ATCC 19718 / CIP 103999 / KCTC 2705 / NBRC 14298).